The sequence spans 201 residues: Retinol-binding protein 4 (201 aa).

The signal sequence occupies residues 1-18; it reads MEWVWALVLLAALGSAQA. Intrachain disulfides connect cysteine 22–cysteine 178, cysteine 88–cysteine 192, and cysteine 138–cysteine 147. Residue glutamine 116 coordinates substrate. Arginine 139 is subject to Omega-N-methylarginine.

This sequence belongs to the calycin superfamily. Lipocalin family. In terms of assembly, interacts with TTR. Interaction with TTR prevents its loss by filtration through the kidney glomeruli. Interacts with STRA6.

The protein localises to the secreted. Functionally, retinol-binding protein that mediates retinol transport in blood plasma. Delivers retinol from the liver stores to the peripheral tissues. Transfers the bound all-trans retinol to STRA6, that then facilitates retinol transport across the cell membrane. This Sus scrofa (Pig) protein is Retinol-binding protein 4 (RBP4).